Consider the following 455-residue polypeptide: Kynurenine 3-monooxygenase (455 aa).

The protein belongs to the aromatic-ring hydroxylase family. KMO subfamily. FAD is required as a cofactor.

The enzyme catalyses L-kynurenine + NADPH + O2 + H(+) = 3-hydroxy-L-kynurenine + NADP(+) + H2O. It functions in the pathway cofactor biosynthesis; NAD(+) biosynthesis; quinolinate from L-kynurenine: step 1/3. Its function is as follows. Catalyzes the hydroxylation of L-kynurenine (L-Kyn) to form 3-hydroxy-L-kynurenine (L-3OHKyn). Required for synthesis of quinolinic acid. This chain is Kynurenine 3-monooxygenase, found in Xanthomonas oryzae pv. oryzae (strain PXO99A).